Reading from the N-terminus, the 44-residue chain is SPbeta prophage-derived uncharacterized protein YosI (44 aa).

This chain is SPbeta prophage-derived uncharacterized protein YosI (yosI), found in Bacillus subtilis (strain 168).